A 342-amino-acid chain; its full sequence is N-acetyl-gamma-glutamyl-phosphate reductase (342 aa).

C156 is an active-site residue.

Belongs to the NAGSA dehydrogenase family. Type 1 subfamily.

It is found in the cytoplasm. The enzyme catalyses N-acetyl-L-glutamate 5-semialdehyde + phosphate + NADP(+) = N-acetyl-L-glutamyl 5-phosphate + NADPH + H(+). It functions in the pathway amino-acid biosynthesis; L-arginine biosynthesis; N(2)-acetyl-L-ornithine from L-glutamate: step 3/4. Catalyzes the NADPH-dependent reduction of N-acetyl-5-glutamyl phosphate to yield N-acetyl-L-glutamate 5-semialdehyde. The protein is N-acetyl-gamma-glutamyl-phosphate reductase of Pseudoalteromonas atlantica (strain T6c / ATCC BAA-1087).